Consider the following 309-residue polypeptide: HPr kinase/phosphorylase (309 aa).

Catalysis depends on residues His138 and Lys159. An ATP-binding site is contributed by 153–160; the sequence is GDSGIGKS. Mg(2+) is bound at residue Ser160. Catalysis depends on Asp177, which acts as the Proton acceptor; for phosphorylation activity. Proton donor; for dephosphorylation activity. An important for the catalytic mechanism of both phosphorylation and dephosphorylation region spans residues 201-210; it reads LEIRGVGIID. Position 202 (Glu202) interacts with Mg(2+). Arg243 is a catalytic residue. Residues 264-269 form an important for the catalytic mechanism of dephosphorylation region; it reads PVKTGR.

It belongs to the HPrK/P family. In terms of assembly, homohexamer. Mg(2+) serves as cofactor.

It catalyses the reaction [HPr protein]-L-serine + ATP = [HPr protein]-O-phospho-L-serine + ADP + H(+). The catalysed reaction is [HPr protein]-O-phospho-L-serine + phosphate + H(+) = [HPr protein]-L-serine + diphosphate. In terms of biological role, catalyzes the ATP- as well as the pyrophosphate-dependent phosphorylation of a specific serine residue in HPr, a phosphocarrier protein of the phosphoenolpyruvate-dependent sugar phosphotransferase system (PTS). HprK/P also catalyzes the pyrophosphate-producing, inorganic phosphate-dependent dephosphorylation (phosphorolysis) of seryl-phosphorylated HPr (P-Ser-HPr). The two antagonistic activities of HprK/P are regulated by several intracellular metabolites, which change their concentration in response to the absence or presence of rapidly metabolisable carbon sources (glucose, fructose, etc.) in the growth medium. Therefore, by controlling the phosphorylation state of HPr, HPrK/P is a sensor enzyme that plays a major role in the regulation of carbon metabolism and sugar transport: it mediates carbon catabolite repression (CCR), and regulates PTS-catalyzed carbohydrate uptake and inducer exclusion. In Streptococcus thermophilus (strain CNRZ 1066), this protein is HPr kinase/phosphorylase.